Consider the following 310-residue polypeptide: Membrane protein insertase YidC 2 (310 aa).

An N-terminal signal peptide occupies residues 1-23; the sequence is MKKTLKRILFSSLSLSMLLLLTG. Residue cysteine 24 is the site of N-palmitoyl cysteine attachment. A lipid anchor (S-diacylglycerol cysteine) is attached at cysteine 24. Helical transmembrane passes span 33-53, 58-78, 135-155, 180-200, and 219-239; these read PYGVIWNTLGVPMANLITYFA, LGFGVAIIIVTVIVRVVILPL, FGGIGCLPLLIQMPFFSAIFF, LTVIIAILYFVQSWLSMQGVP, and VFMSISLPASVALYWFIGGIF. Residues 266–310 are disordered; it reads NPPKAYKANNARKDVTNSTKATESNQAIITSKKTNRNAGKQKRRG. The span at 281-297 shows a compositional bias: polar residues; it reads TNSTKATESNQAIITSK. Positions 298 to 310 are enriched in basic residues; it reads KTNRNAGKQKRRG.

This sequence belongs to the OXA1/ALB3/YidC family. Type 2 subfamily.

The protein resides in the cell membrane. Its function is as follows. Required for the insertion and/or proper folding and/or complex formation of integral membrane proteins into the membrane. Involved in integration of membrane proteins that insert both dependently and independently of the Sec translocase complex, as well as at least some lipoproteins. The chain is Membrane protein insertase YidC 2 from Streptococcus agalactiae serotype V (strain ATCC BAA-611 / 2603 V/R).